Reading from the N-terminus, the 238-residue chain is ATP-dependent dethiobiotin synthetase BioD (238 aa).

13-18 (DIGKTF) is a binding site for ATP. A Mg(2+)-binding site is contributed by T17. The active site involves K38. S42 is a substrate binding site. ATP is bound by residues D55, 116-119 (EGSG), 209-211 (PRI), and N216. Mg(2+) is bound by residues D55 and E116.

It belongs to the dethiobiotin synthetase family. As to quaternary structure, homodimer. Mg(2+) is required as a cofactor.

The protein localises to the cytoplasm. It carries out the reaction (7R,8S)-7,8-diammoniononanoate + CO2 + ATP = (4R,5S)-dethiobiotin + ADP + phosphate + 3 H(+). The protein operates within cofactor biosynthesis; biotin biosynthesis; biotin from 7,8-diaminononanoate: step 1/2. Functionally, catalyzes a mechanistically unusual reaction, the ATP-dependent insertion of CO2 between the N7 and N8 nitrogen atoms of 7,8-diaminopelargonic acid (DAPA, also called 7,8-diammoniononanoate) to form a ureido ring. The sequence is that of ATP-dependent dethiobiotin synthetase BioD from Clostridium novyi (strain NT).